The chain runs to 101 residues: NADH-quinone oxidoreductase subunit K (101 aa).

The next 3 helical transmembrane spans lie at 4 to 24 (LAHF…GIFL), 30 to 50 (IVLL…FVAF), and 61 to 81 (VFVF…LAIL).

It belongs to the complex I subunit 4L family. NDH-1 is composed of 14 different subunits. Subunits NuoA, H, J, K, L, M, N constitute the membrane sector of the complex.

The protein localises to the cell inner membrane. It carries out the reaction a quinone + NADH + 5 H(+)(in) = a quinol + NAD(+) + 4 H(+)(out). Its function is as follows. NDH-1 shuttles electrons from NADH, via FMN and iron-sulfur (Fe-S) centers, to quinones in the respiratory chain. The immediate electron acceptor for the enzyme in this species is believed to be ubiquinone. Couples the redox reaction to proton translocation (for every two electrons transferred, four hydrogen ions are translocated across the cytoplasmic membrane), and thus conserves the redox energy in a proton gradient. The protein is NADH-quinone oxidoreductase subunit K of Cupriavidus pinatubonensis (strain JMP 134 / LMG 1197) (Cupriavidus necator (strain JMP 134)).